Consider the following 173-residue polypeptide: Gamma-crystallin S-2 (173 aa).

Beta/gamma crystallin 'Greek key' domains follow at residues 2–40 (GKII…RVES) and 41–83 (DWWV…RVPT). Residues 84 to 88 (HTQRP) form a connecting peptide region. Beta/gamma crystallin 'Greek key' domains lie at 89-129 (YRMR…HVMG) and 130-172 (AYWI…RRIM).

Belongs to the beta/gamma-crystallin family.

Functionally, crystallins are the dominant structural components of the vertebrate eye lens. The polypeptide is Gamma-crystallin S-2 (GS-2) (Chiloscyllium indicum (Slender bamboo shark)).